We begin with the raw amino-acid sequence, 156 residues long: 6,7-dimethyl-8-ribityllumazine synthase (156 aa).

Residues F23, 57–59 (AYE), and 81–83 (AII) each bind 5-amino-6-(D-ribitylamino)uracil. (2S)-2-hydroxy-3-oxobutyl phosphate is bound at residue 86-87 (GT). The active-site Proton donor is H89. Residue F114 participates in 5-amino-6-(D-ribitylamino)uracil binding. A (2S)-2-hydroxy-3-oxobutyl phosphate-binding site is contributed by R128.

It belongs to the DMRL synthase family.

The enzyme catalyses (2S)-2-hydroxy-3-oxobutyl phosphate + 5-amino-6-(D-ribitylamino)uracil = 6,7-dimethyl-8-(1-D-ribityl)lumazine + phosphate + 2 H2O + H(+). It functions in the pathway cofactor biosynthesis; riboflavin biosynthesis; riboflavin from 2-hydroxy-3-oxobutyl phosphate and 5-amino-6-(D-ribitylamino)uracil: step 1/2. Its function is as follows. Catalyzes the formation of 6,7-dimethyl-8-ribityllumazine by condensation of 5-amino-6-(D-ribitylamino)uracil with 3,4-dihydroxy-2-butanone 4-phosphate. This is the penultimate step in the biosynthesis of riboflavin. The chain is 6,7-dimethyl-8-ribityllumazine synthase from Helicobacter pylori (strain J99 / ATCC 700824) (Campylobacter pylori J99).